The sequence spans 161 residues: Nucleotide-binding protein Bd0338 (161 aa).

It belongs to the YajQ family.

Nucleotide-binding protein. This Bdellovibrio bacteriovorus (strain ATCC 15356 / DSM 50701 / NCIMB 9529 / HD100) protein is Nucleotide-binding protein Bd0338.